Reading from the N-terminus, the 116-residue chain is Large ribosomal subunit protein uL18 (116 aa).

This sequence belongs to the universal ribosomal protein uL18 family. Part of the 50S ribosomal subunit; part of the 5S rRNA/L5/L18/L25 subcomplex. Contacts the 5S and 23S rRNAs.

Functionally, this is one of the proteins that bind and probably mediate the attachment of the 5S RNA into the large ribosomal subunit, where it forms part of the central protuberance. This chain is Large ribosomal subunit protein uL18, found in Acinetobacter baumannii (strain AB307-0294).